A 557-amino-acid polypeptide reads, in one-letter code: Potassium-transporting ATPase potassium-binding subunit (557 aa).

Transmembrane regions (helical) follow at residues 5-25 (GFLL…PLGS), 63-83 (LCAI…MLLG), 132-152 (GLTV…FAFI), 170-190 (LLRI…LFFI), 253-273 (FVQM…FGEV), 283-303 (LLWA…WAEV), 329-349 (VLVS…AVIA), 356-376 (ALGG…FGGV), 379-399 (GLYG…LMIG), 416-436 (LTAL…ALAM), 484-504 (LLAF…MAIA), and 526-546 (LFVG…FIPA).

This sequence belongs to the KdpA family. The system is composed of three essential subunits: KdpA, KdpB and KdpC.

It localises to the cell inner membrane. Part of the high-affinity ATP-driven potassium transport (or Kdp) system, which catalyzes the hydrolysis of ATP coupled with the electrogenic transport of potassium into the cytoplasm. This subunit binds the periplasmic potassium ions and delivers the ions to the membrane domain of KdpB through an intramembrane tunnel. This is Potassium-transporting ATPase potassium-binding subunit from Shigella flexneri.